The chain runs to 568 residues: Urease subunit alpha (568 aa).

Residues 130–568 (GGIDTHIHFI…LPMAQRYFLF (439 aa)) enclose the Urease domain. The Ni(2+) site is built by His135, His137, and Lys218. Lys218 carries the post-translational modification N6-carboxylysine. Substrate is bound at residue His220. The Ni(2+) site is built by His247 and His273. The active-site Proton donor is His321. Asp361 contacts Ni(2+).

The protein belongs to the metallo-dependent hydrolases superfamily. Urease alpha subunit family. In terms of assembly, heterotrimer of UreA (gamma), UreB (beta) and UreC (alpha) subunits. Three heterotrimers associate to form the active enzyme. Requires Ni cation as cofactor. Carboxylation allows a single lysine to coordinate two nickel ions.

It localises to the cytoplasm. The enzyme catalyses urea + 2 H2O + H(+) = hydrogencarbonate + 2 NH4(+). The protein operates within nitrogen metabolism; urea degradation; CO(2) and NH(3) from urea (urease route): step 1/1. This is Urease subunit alpha from Burkholderia pseudomallei (strain K96243).